The sequence spans 119 residues: Protein TusC (119 aa).

Belongs to the DsrF/TusC family. In terms of assembly, heterohexamer, formed by a dimer of trimers. The hexameric TusBCD complex contains 2 copies each of TusB, TusC and TusD. The TusBCD complex interacts with TusE.

It is found in the cytoplasm. Part of a sulfur-relay system required for 2-thiolation of 5-methylaminomethyl-2-thiouridine (mnm(5)s(2)U) at tRNA wobble positions. The protein is Protein TusC of Klebsiella pneumoniae subsp. pneumoniae (strain ATCC 700721 / MGH 78578).